Reading from the N-terminus, the 185-residue chain is Capsid protein (185 aa).

Residues 136-185 (NAPILSTLPETTVVRRRDRGRSPRRRTPSPRRRRSQSPRRRRSQSRESQC) form a disordered region. The segment covering 149–178 (VRRRDRGRSPRRRTPSPRRRRSQSPRRRRS) has biased composition (basic residues). Serine 157, serine 164, and serine 172 each carry phosphoserine; by host. The stretch at 157 to 163 (SPRRRTP) is one 1; half-length repeat. The interval 157-179 (SPRRRTPSPRRRRSQSPRRRRSQ) is 3 X 8 AA repeats of S-P-R-R-R-[PR]-S-Q. The Bipartite nuclear localization signal signature appears at 160–177 (RRTPSPRRRRSQSPRRRR). 2 consecutive repeat copies span residues 164 to 171 (SPRRRRSQ) and 172 to 179 (SPRRRRSQ). The RNA binding stretch occupies residues 179 to 185 (QSRESQC).

Belongs to the orthohepadnavirus core antigen family. In terms of assembly, homodimerizes, then multimerizes. Interacts with cytosol exposed regions of viral L glycoprotein present in the reticulum-to-Golgi compartment. Interacts with human FLNB. Phosphorylated form interacts with host importin alpha; this interaction depends on the exposure of the NLS, which itself depends upon genome maturation and/or phosphorylation of the capsid protein. Interacts with host NUP153. Phosphorylated by host SRPK1, SRPK2, and maybe protein kinase C or GAPDH. Phosphorylation is critical for pregenomic RNA packaging. Protein kinase C phosphorylation is stimulated by HBx protein and may play a role in transport of the viral genome to the nucleus at the late step during the viral replication cycle.

It is found in the virion. The protein localises to the host cytoplasm. Self assembles to form an icosahedral capsid. Most capsids appear to be large particles with an icosahedral symmetry of T=4 and consist of 240 copies of capsid protein, though a fraction forms smaller T=3 particles consisting of 180 capsid proteins. Entering capsids are transported along microtubules to the nucleus. Phosphorylation of the capsid is thought to induce exposure of nuclear localization signal in the C-terminal portion of the capsid protein that allows binding to the nuclear pore complex via the importin (karyopherin-) alpha and beta. Capsids are imported in intact form through the nuclear pore into the nuclear basket, where it probably binds NUP153. Only capsids that contain the mature viral genome can release the viral DNA and capsid protein into the nucleoplasm. Immature capsids get stuck in the basket. Capsids encapsulate the pre-genomic RNA and the P protein. Pre-genomic RNA is reverse-transcribed into DNA while the capsid is still in the cytoplasm. The capsid can then either be directed to the nucleus, providing more genomes for transcription, or bud through the endoplasmic reticulum to provide new virions. The chain is Capsid protein from Homo sapiens (Human).